The chain runs to 59 residues: uncharacterized protein (59 aa).

This is an uncharacterized protein from Acheta domesticus (House cricket).